The following is a 290-amino-acid chain: Diaminopimelate epimerase (290 aa).

3 residues coordinate substrate: N17, Q49, and N69. The active-site Proton donor is the C78. Substrate-binding positions include 79–80 (GN), N166, N199, and 217–218 (ER). The Proton acceptor role is filled by C226. 227–228 (GS) is a binding site for substrate.

The protein belongs to the diaminopimelate epimerase family. In terms of assembly, homodimer.

Its subcellular location is the cytoplasm. It carries out the reaction (2S,6S)-2,6-diaminopimelate = meso-2,6-diaminopimelate. The protein operates within amino-acid biosynthesis; L-lysine biosynthesis via DAP pathway; DL-2,6-diaminopimelate from LL-2,6-diaminopimelate: step 1/1. Catalyzes the stereoinversion of LL-2,6-diaminopimelate (L,L-DAP) to meso-diaminopimelate (meso-DAP), a precursor of L-lysine and an essential component of the bacterial peptidoglycan. The protein is Diaminopimelate epimerase of Nitrobacter hamburgensis (strain DSM 10229 / NCIMB 13809 / X14).